Here is a 283-residue protein sequence, read N- to C-terminus: uncharacterized protein (283 aa).

The segment covering 1–10 (MEVNKTTESL) has biased composition (polar residues). Disordered stretches follow at residues 1–96 (MEVN…SGGN) and 255–283 (DQEG…EAQI). Basic and acidic residues-rich tracts occupy residues 14–34 (KVEH…RDVK) and 44–81 (SKQE…VSSR).

This sequence belongs to the chlamydial CPn_0705/CT_671/TC_0042 family.

This is an uncharacterized protein from Chlamydia muridarum (strain MoPn / Nigg).